The primary structure comprises 177 residues: Acireductone dioxygenase (177 aa).

Positions 97, 99, 103, and 141 each coordinate Fe(2+). Ni(2+) contacts are provided by His-97, His-99, Glu-103, and His-141.

The protein belongs to the acireductone dioxygenase (ARD) family. In terms of assembly, monomer. Requires Fe(2+) as cofactor. It depends on Ni(2+) as a cofactor.

It carries out the reaction 1,2-dihydroxy-5-(methylsulfanyl)pent-1-en-3-one + O2 = 3-(methylsulfanyl)propanoate + CO + formate + 2 H(+). It catalyses the reaction 1,2-dihydroxy-5-(methylsulfanyl)pent-1-en-3-one + O2 = 4-methylsulfanyl-2-oxobutanoate + formate + 2 H(+). It participates in amino-acid biosynthesis; L-methionine biosynthesis via salvage pathway; L-methionine from S-methyl-5-thio-alpha-D-ribose 1-phosphate: step 5/6. Catalyzes 2 different reactions between oxygen and the acireductone 1,2-dihydroxy-3-keto-5-methylthiopentene (DHK-MTPene) depending upon the metal bound in the active site. Fe-containing acireductone dioxygenase (Fe-ARD) produces formate and 2-keto-4-methylthiobutyrate (KMTB), the alpha-ketoacid precursor of methionine in the methionine recycle pathway. Ni-containing acireductone dioxygenase (Ni-ARD) produces methylthiopropionate, carbon monoxide and formate, and does not lie on the methionine recycle pathway. This is Acireductone dioxygenase from Leptospira biflexa serovar Patoc (strain Patoc 1 / ATCC 23582 / Paris).